Reading from the N-terminus, the 185-residue chain is Ribosome-recycling factor (185 aa).

This sequence belongs to the RRF family.

The protein localises to the cytoplasm. Its function is as follows. Responsible for the release of ribosomes from messenger RNA at the termination of protein biosynthesis. May increase the efficiency of translation by recycling ribosomes from one round of translation to another. The chain is Ribosome-recycling factor from Parafrankia sp. (strain EAN1pec).